The following is an 82-amino-acid chain: Putative membrane protein insertion efficiency factor (82 aa).

It belongs to the UPF0161 family.

It localises to the cell inner membrane. In terms of biological role, could be involved in insertion of integral membrane proteins into the membrane. This chain is Putative membrane protein insertion efficiency factor, found in Rickettsia typhi (strain ATCC VR-144 / Wilmington).